A 213-amino-acid chain; its full sequence is Probable GH family 25 lysozyme 4 (213 aa).

An N-terminal signal peptide occupies residues 1–19; the sequence is MRLFLLLITFIALFGAINA. Positions 21-213 constitute a Ch-type lysozyme domain; sequence SGVDISQGSS…VGYDFNWYPN (193 aa). Active-site residues include Asp24, Asp112, and Glu114.

This sequence belongs to the glycosyl hydrolase 25 family.

The protein resides in the secreted. The catalysed reaction is Hydrolysis of (1-&gt;4)-beta-linkages between N-acetylmuramic acid and N-acetyl-D-glucosamine residues in a peptidoglycan and between N-acetyl-D-glucosamine residues in chitodextrins.. The chain is Probable GH family 25 lysozyme 4 from Dictyostelium discoideum (Social amoeba).